Here is a 75-residue protein sequence, read N- to C-terminus: Small integral membrane protein 7 (75 aa).

The N-terminal stretch at 1–17 (MIGDILLFGTLLMNAGA) is a signal peptide. The Extracellular segment spans residues 18–53 (VLNFKLKKKDTQGFGEESREPSTGDNIREFLLSLRY). The chain crosses the membrane as a helical span at residues 54–74 (FRIFIALWNIFMMFCMIVLFG). Position 75 (Ser-75) is a topological domain, cytoplasmic.

This sequence belongs to the SMIM7 family.

It localises to the membrane. This is Small integral membrane protein 7 (SMIM7) from Homo sapiens (Human).